The following is a 200-amino-acid chain: Male-specific histamine-binding salivary protein (200 aa).

An N-terminal signal peptide occupies residues Met1 to Ala18. 4 residues coordinate histamine: Ser37, Asp41, Asp56, and Trp59. Cystine bridges form between Cys65-Cys193 and Cys137-Cys169. N-linked (GlcNAc...) asparagine glycosylation is present at Asn79. Positions 97, 115, 125, 138, 154, and 156 each coordinate histamine.

The protein belongs to the calycin superfamily. Histamine-binding salivary protein family. Homodimer; disulcde-linked. Post-translationally, N-glycosylated. As to expression, expressed in salivary glands.

It is found in the secreted. In terms of biological role, salivary tick protein that acts by scavenging histamine at the wound site, outcompeting histamine receptors for histamine, thereby overcoming host inflammatory responses. Binds histamine with a high-affinity (Kd=1.2 nM). Contains two binding histamine sites (H and L), that appear to bind histamine with differing affinities. This Rhipicephalus appendiculatus (Brown ear tick) protein is Male-specific histamine-binding salivary protein.